The primary structure comprises 314 residues: GTP cyclohydrolase FolE2 (314 aa).

The tract at residues 290 to 314 (DASAWSAPQASAPDQQESFATGNER) is disordered. Low complexity predominate over residues 291–305 (ASAWSAPQASAPDQQ).

It belongs to the GTP cyclohydrolase IV family.

The catalysed reaction is GTP + H2O = 7,8-dihydroneopterin 3'-triphosphate + formate + H(+). It participates in cofactor biosynthesis; 7,8-dihydroneopterin triphosphate biosynthesis; 7,8-dihydroneopterin triphosphate from GTP: step 1/1. Its function is as follows. Converts GTP to 7,8-dihydroneopterin triphosphate. The protein is GTP cyclohydrolase FolE2 of Pseudomonas putida (strain ATCC 700007 / DSM 6899 / JCM 31910 / BCRC 17059 / LMG 24140 / F1).